The primary structure comprises 886 residues: MELRCGGLLFSSRFDSGNLAHVEKVESLSSDGEGVGGGASALTSGIASSPDYEFNVWTRPDCAETEFENGNRSWFYFSVRGGMPGKLIKINIMNMNKQSKLYSQGMAPFVRTLPTRPRWERIRDRPTFEMTETQFVLSFVHRFVEGRGATTFFAFCYPFSYSDCQELLNQLDQRFPENHPTHSSPLDTIYYHRELLCYSLDGLRVDLLTITSCHGLREDREPRLEQLFPDTSTPRPFRFAGKRIFFLSSRVHPGETPSSFVFNGFLDFILRPDDPRAQTLRRLFVFKLIPMLNPDGVVRGHYRTDSRGVNLNRQYLKPDAVLHPAIYGAKAVLLYHHVHSRLNSQSSSEHQPSSCLPPDAPVSDLEKANNLQNEAQCGHSADRHNAEAWKQTEPAEQKLNSVWIMPQQSAGLEESAPDTIPPKESGVAYYVDLHGHASKRGCFMYGNSFSDESTQVENMLYPKLISLNSAHFDFQGCNFSEKNMYARDRRDGQSKEGSGRVAIYKASGIIHSYTLECNYNTGRSVNSIPAACHDNGRASPPPPPAFPSRYTVELFEQVGRAMAIAALDMAECNPWPRIVLSEHSSLTNLRAWMLKHVRNSRGLSSTLNVGVNKKRGLRTPPKSHNGLPVSCSENTLSRARSFSTGTSAGGSSSSQQNSPQMKNSPSFPFHGSRPAGLPGLGSSTQKVTHRVLGPVREPRSQDRRRQQQPLNHRPAGSLAPSPAPTSSGPASSHKLGSCLLPDSFNIPGSSCSLLSSGDKPEAVMVIGKGLLGTGARMPCIKTRLQARPRLGRGSPPTRRGMKGSSGPTSPTPRTRESSELELGSCSATPGLPQARPPRPRSAPAFSPISCSLSDSPSWNCYSRGPLGQPEVCFVPKSPPLTVSPRV.

Positions 157–570 constitute a Peptidase M14 domain; sequence YPFSYSDCQE…AMAIAALDMA (414 aa). Residues histidine 252 and glutamate 255 each coordinate Zn(2+). Residues 344 to 354 are compositionally biased toward low complexity; that stretch reads SQSSSEHQPSS. A disordered region spans residues 344-364; it reads SQSSSEHQPSSCLPPDAPVSD. Histidine 434 contributes to the Zn(2+) binding site. The Proton donor/acceptor role is filled by glutamate 516. Disordered stretches follow at residues 605–734 and 784–848; these read STLN…SSHK and LQAR…FSPI. Polar residues predominate over residues 631-640; the sequence is CSENTLSRAR. The span at 641 to 666 shows a compositional bias: low complexity; the sequence is SFSTGTSAGGSSSSQQNSPQMKNSPS. The segment covering 696 to 705 has biased composition (basic and acidic residues); it reads REPRSQDRRR. A compositionally biased stretch (low complexity) spans 714–732; the sequence is PAGSLAPSPAPTSSGPASS. Phosphoserine is present on serine 841.

The protein belongs to the peptidase M14 family. The cofactor is Zn(2+). As to expression, expressed in brain.

The protein localises to the cytoplasm. It localises to the cytosol. It is found in the nucleus. Its subcellular location is the cytoskeleton. The protein resides in the spindle. The protein localises to the midbody. The enzyme catalyses gamma-L-glutamyl-L-glutamyl-[protein] + H2O = L-glutamyl-[protein] + L-glutamate. It carries out the reaction (L-glutamyl)(n+1)-gamma-L-glutamyl-L-glutamyl-[protein] + H2O = (L-glutamyl)(n)-gamma-L-glutamyl-L-glutamyl-[protein] + L-glutamate. It catalyses the reaction C-terminal L-alpha-aminoacyl-L-glutamyl-[tubulin] + H2O = C-terminal L-alpha-aminoacyl-[tubulin] + L-glutamate. The catalysed reaction is C-terminal L-alpha-aminoacyl-L-glutamyl-L-glutamyl-[tubulin] + H2O = C-terminal L-alpha-aminoacyl-L-glutamyl-[tubulin] + L-glutamate. Functionally, metallocarboxypeptidase that mediates deglutamylation of tubulin and non-tubulin target proteins. Catalyzes the removal of polyglutamate side chains present on the gamma-carboxyl group of glutamate residues within the C-terminal tail of alpha- and beta-tubulin. Cleaves alpha- and gamma-linked polyglutamate tubulin side-chain, as well as the branching point glutamate. Also catalyzes the removal of alpha-linked glutamate residues from the carboxy-terminus of alpha-tubulin. Mediates deglutamylation of nucleotidyltransferase CGAS, leading to CGAS antiviral defense response activation. In Homo sapiens (Human), this protein is Cytosolic carboxypeptidase-like protein 5.